The sequence spans 295 residues: Elongation factor Ts (295 aa).

Residues 80–83 (TDFV) form an involved in Mg(2+) ion dislocation from EF-Tu region.

This sequence belongs to the EF-Ts family.

The protein resides in the cytoplasm. Functionally, associates with the EF-Tu.GDP complex and induces the exchange of GDP to GTP. It remains bound to the aminoacyl-tRNA.EF-Tu.GTP complex up to the GTP hydrolysis stage on the ribosome. In Lysinibacillus sphaericus (strain C3-41), this protein is Elongation factor Ts.